The primary structure comprises 885 residues: Disease resistance protein RFL1 (885 aa).

The stretch at 27–61 (SYIQNLSENLASLQKAMGVLNAKRDDVQGRINREE) forms a coiled coil. An NB-ARC domain is found at 141-443 (EAAPIAEVEE…CEGFIKEKQG (303 aa)). 183–190 (GMGGVGKT) is an ATP binding site. 7 LRR repeats span residues 517 to 538 (AVKRMSLMNNNFEKILGSPECV), 539 to 561 (ELITLFLQNNYKLVDISMEFFRC), 564 to 586 (SLAVLDLSENHSLSELPEEISEL), 588 to 610 (SLQYLDLSGTYIERLPHGLHELR), 611 to 633 (KLVHLKLERTRRLESISGISYLS), 634 to 655 (SLRTLRLRDSKTTLDTGLMKEL), and 657 to 679 (LLEHLELITTDISSGLVGELFCY).

The protein belongs to the disease resistance NB-LRR family.

Disease resistance (R) protein. In Arabidopsis thaliana (Mouse-ear cress), this protein is Disease resistance protein RFL1 (RFL1).